Here is a 383-residue protein sequence, read N- to C-terminus: Succinyl-diaminopimelate desuccinylase (383 aa).

His69 contributes to the Zn(2+) binding site. Residue Asp71 is part of the active site. Residue Asp103 participates in Zn(2+) binding. Glu137 (proton acceptor) is an active-site residue. 3 residues coordinate Zn(2+): Glu138, Glu166, and His357.

The protein belongs to the peptidase M20A family. DapE subfamily. As to quaternary structure, homodimer. It depends on Zn(2+) as a cofactor. Co(2+) serves as cofactor.

It carries out the reaction N-succinyl-(2S,6S)-2,6-diaminopimelate + H2O = (2S,6S)-2,6-diaminopimelate + succinate. It functions in the pathway amino-acid biosynthesis; L-lysine biosynthesis via DAP pathway; LL-2,6-diaminopimelate from (S)-tetrahydrodipicolinate (succinylase route): step 3/3. Functionally, catalyzes the hydrolysis of N-succinyl-L,L-diaminopimelic acid (SDAP), forming succinate and LL-2,6-diaminopimelate (DAP), an intermediate involved in the bacterial biosynthesis of lysine and meso-diaminopimelic acid, an essential component of bacterial cell walls. The polypeptide is Succinyl-diaminopimelate desuccinylase (Rickettsia typhi (strain ATCC VR-144 / Wilmington)).